The following is a 1559-amino-acid chain: Fatty acid synthase alpha subunit stcJ (1559 aa).

Residues 68–147 (DTPLTAIFII…AALGEVSLGP (80 aa)) form the Carrier domain. S106 is subject to O-(pantetheine 4'-phosphoryl)serine. A ketoreductase (KR) domain region spans residues 457-693 (NHTYLITGAG…SLLLTPQLAT (237 aa)). Positions 873-1327 (REVFQEIVLE…QKEAQLVGVH (455 aa)) constitute a Ketosynthase family 3 (KS3) domain. Catalysis depends on C1058, which acts as the For beta-ketoacyl synthase activity. Residues 1105-1117 (VRDEQARGREPGE) are compositionally biased toward basic and acidic residues. The interval 1105–1125 (VRDEQARGREPGEMSRPTAAS) is disordered. Residues H1212 and H1253 each act as for beta-ketoacyl synthase activity in the active site. D1432 lines the Mg(2+) pocket. Acetyl-CoA contacts are provided by residues 1432–1434 (DTV), 1480–1490 (EAVFKCLQTVS), 1504–1506 (RVQ), and 1532–1534 (LSY). S1533 is a binding site for Mg(2+).

Belongs to the thiolase-like superfamily. Fungal fatty acid synthetase subunit alpha family. In terms of assembly, [Alpha(6)beta(6)] hexamers of two multifunctional subunits (alpha and beta).

It catalyses the reaction acetyl-CoA + n malonyl-CoA + 2n NADPH + 4n H(+) = a long-chain-acyl-CoA + n CoA + n CO2 + 2n NADP(+).. The catalysed reaction is a fatty acyl-[ACP] + malonyl-[ACP] + H(+) = a 3-oxoacyl-[ACP] + holo-[ACP] + CO2. The enzyme catalyses a (3R)-hydroxyacyl-[ACP] + NADP(+) = a 3-oxoacyl-[ACP] + NADPH + H(+). Its pathway is mycotoxin biosynthesis; sterigmatocystin biosynthesis. In terms of biological role, fatty acid synthase alpha subunit; part of the gene cluster that mediates the biosynthesis of sterigmatocystin (ST), a polyketide-derived furanocoumarin which is part of the most toxic and carcinogenic compounds among the known mycotoxins. The first step in the biosynthesis of sterigmatocystin is the production of hexanoate by the fatty acid synthase (FAS) units stcJ and stcK. The polyketide backbone is assembled by the non-reducing polyketide synthase stcA by condensation of the starter hexanoyl-CoA and 7 malonyl-CoA extender units followed by cyclization and release of norsolorinic acid. Norsolorinic acid is the first stable intermediate in the biosynthesis of sterigmatocystin and is converted into averantin (AVN) by the ketoreductase stcE which reduces the hexanoate ketone to an alcohol. Averantin is then oxidized into 5'-hydroxyaverantin (HAVN) by the cytochrome P450 monooxygenase stcF. 5'-hydroxyaverantin is further converted to 5'-oxyaverantin (OAVN) by the 5'-hydroxyaverantin dehydrogenase stcG. The next step is the conversion of OAVN into averufin (AVF) which is catalyzed by a yet to be identified enzyme. The cytochrome P450 monooxygenase stcB and the flavin-binding monooxygenase stcW are both required for the conversion of averufin to 1-hydroxyversicolorone. The esterase stcI probably catalyzes the formation of versiconal hemiacetal acetate from 1-hydroxyversicolorone. The oxydoreductase stcN then probably catalyzes the biosynthetic step from versiconal to versicolorin B (VERB). The next step is performed by the versicolorin B desaturase stcL to produce versicolorin A (VERA). The ketoreductase stcU and the cytochrome P450 monooxygenase stcS are involved in the conversion of versicolorin A to demethylsterigmatocystin. The Baeyer-Villiger oxidas stcQ and the reductase stcR might be involved in the biosynthetic step from versicolorin A to demethylsterigmatocystin. The final step in the biosynthesis of sterigmatocystin is the methylation of demethylsterigmatocystin catalyzed by the methyltransferase stcP. The sequence is that of Fatty acid synthase alpha subunit stcJ from Emericella nidulans (strain FGSC A4 / ATCC 38163 / CBS 112.46 / NRRL 194 / M139) (Aspergillus nidulans).